The chain runs to 530 residues: Chaperone Ric-8A (530 aa).

Ser-435 carries the phosphoserine modification. Residues Thr-440 and Thr-442 each carry the phosphothreonine modification. Ser-501, Ser-522, Ser-523, and Ser-527 each carry phosphoserine.

This sequence belongs to the synembryn family. In terms of assembly, interacts with GDP-bound G alpha proteins GNAI1, GNAO1 and GNAQ, and with GNA13 with lower affinity. Does not interact with G-alpha proteins when they are in complex with subunits beta and gamma. Interacts (via C-terminus) with RGS14; the interaction stimulates the dissociation of the complex between RGS14 and the active GTP-bound form of GNAI1. Interacts with NCS1; interaction is favored in the absence of Ca(2+) and myristoylation of NCS1 is not required. In terms of processing, phosphorylated at Ser-435 and Thr-440 by CK2, stabilizing its interface with G alpha proteins.

It localises to the cytoplasm. Its subcellular location is the cell cortex. Its function is as follows. Chaperone that specifically binds and folds nascent G alpha proteins prior to G protein heterotrimer formation, promoting their stability and activity: folds GNAI1, GNAO1, GNA13 and GNAQ. Does not fold G(s) G-alpha proteins GNAS nor GNAL. Also acts as a guanine nucleotide exchange factor (GEF) for G alpha proteins by stimulating exchange of bound GDP for free GTP. Involved in regulation of microtubule pulling forces during mitotic movement of chromosomes by stimulating G(i)-alpha protein (GNAI1), possibly leading to release G(i)-alpha-GTP and NuMA proteins from the NuMA-GPSM2-G(i)-alpha-GDP complex. Also acts as an activator for G(q)-alpha (GNAQ) protein by enhancing the G(q)-coupled receptor-mediated ERK activation. This is Chaperone Ric-8A (RIC8A) from Macaca fascicularis (Crab-eating macaque).